We begin with the raw amino-acid sequence, 184 residues long: MGLLTILKKMKQKERELRLLMLGLDNAGKTTILKKFNGEDIDTISPTLGFNIKTLEHRGFKLNIWDVGGQKSLRSYWRNYFESTDGLIWVVDSADRQRMQDCQRELQSLLVEERLAGATLLIFANKQDLPGALSSNAIREVLELDSIRSHHWCIQGCSAVTGENLLPGIDWLLDDISSRIFTAD.

Gly-2 carries the N-myristoyl glycine lipid modification. Residue Gly-23–Thr-30 coordinates GTP. At Ser-45 the chain carries Phosphoserine. GTP is bound by residues Asp-66–Gln-70 and Gly-68. Lys-71 participates in a covalent cross-link: Glycyl lysine isopeptide (Lys-Gly) (interchain with G-Cter in ubiquitin). GTP is bound at residue Asn-125–Asp-128.

This sequence belongs to the small GTPase superfamily. Arf family. As to quaternary structure, found in a complex with ARL2, ARL2BP and SLC25A6. Found in a complex with at least ARL2, PPP2CB, PPP2R1A, PPP2R2A, PPP2R5E and TBCD. Found in a complex with ARL2, ARL2BP and SLC25A4. The GTP-bound form interacts with PDE6D. Interacts with ELMOD2. The GTP-bound form interacts with ARL2BP. Interacts, preferentially in its GDP-bound state, with TBCD. Interacts with UNC119. Not N-myristoylated.

It is found in the mitochondrion intermembrane space. The protein resides in the cytoplasm. It localises to the cytoskeleton. The protein localises to the microtubule organizing center. Its subcellular location is the centrosome. It is found in the nucleus. Functionally, small GTP-binding protein which cycles between an inactive GDP-bound and an active GTP-bound form, and the rate of cycling is regulated by guanine nucleotide exchange factors (GEF) and GTPase-activating proteins (GAP). GTP-binding protein that does not act as an allosteric activator of the cholera toxin catalytic subunit. Regulates formation of new microtubules and centrosome integrity. Prevents the TBCD-induced microtubule destruction. Participates in association with TBCD, in the disassembly of the apical junction complexes. Antagonizes the effect of TBCD on epithelial cell detachment and tight and adherens junctions disassembly. Together with ARL2, plays a role in the nuclear translocation, retention and transcriptional activity of STAT3. Component of a regulated secretory pathway involved in Ca(2+)-dependent release of acetylcholine. Required for normal progress through the cell cycle. Also regulates mitochondrial integrity and function. This chain is ADP-ribosylation factor-like protein 2 (ARL2), found in Homo sapiens (Human).